Here is a 160-residue protein sequence, read N- to C-terminus: Ribosomal RNA large subunit methyltransferase H (160 aa).

S-adenosyl-L-methionine contacts are provided by residues L76, G108, and 127 to 132 (LGKMTW).

Belongs to the RNA methyltransferase RlmH family. Homodimer.

It is found in the cytoplasm. It catalyses the reaction pseudouridine(1915) in 23S rRNA + S-adenosyl-L-methionine = N(3)-methylpseudouridine(1915) in 23S rRNA + S-adenosyl-L-homocysteine + H(+). In terms of biological role, specifically methylates the pseudouridine at position 1915 (m3Psi1915) in 23S rRNA. The protein is Ribosomal RNA large subunit methyltransferase H of Rhizobium etli (strain ATCC 51251 / DSM 11541 / JCM 21823 / NBRC 15573 / CFN 42).